Reading from the N-terminus, the 530-residue chain is 5-aminolevulinate synthase, mitochondrial (530 aa).

The N-terminal 26 residues, 1–26, are a transit peptide targeting the mitochondrion; it reads MFRPVLKVRPSFSYPYSIVSSRSVRL. Substrate is bound by residues R73, S186, and K205. 3 residues coordinate pyridoxal 5'-phosphate: S238, H266, and T316. Residue K319 is part of the active site. Position 319 is an N6-(pyridoxal phosphate)lysine (K319). Pyridoxal 5'-phosphate-binding residues include T348 and T349. T434 contacts substrate.

Belongs to the class-II pyridoxal-phosphate-dependent aminotransferase family. Homodimer. It depends on pyridoxal 5'-phosphate as a cofactor.

It localises to the mitochondrion matrix. The enzyme catalyses succinyl-CoA + glycine + H(+) = 5-aminolevulinate + CO2 + CoA. Its pathway is porphyrin-containing compound metabolism; protoporphyrin-IX biosynthesis; 5-aminolevulinate from glycine: step 1/1. Catalyzes the synthesis of 5-aminolevulinate (ALA) from succinyl-CoA and glycine, the first and rate-limiting step in heme biosynthesis. The chain is 5-aminolevulinate synthase, mitochondrial (HEM1) from Candida glabrata (strain ATCC 2001 / BCRC 20586 / JCM 3761 / NBRC 0622 / NRRL Y-65 / CBS 138) (Yeast).